A 390-amino-acid polypeptide reads, in one-letter code: 3-ketoacyl-CoA thiolase (390 aa).

Cys95 (acyl-thioester intermediate) is an active-site residue. Catalysis depends on proton acceptor residues His346 and Cys376.

This sequence belongs to the thiolase-like superfamily. Thiolase family. In terms of assembly, heterotetramer of two alpha chains (FadB) and two beta chains (FadA).

Its subcellular location is the cytoplasm. The enzyme catalyses an acyl-CoA + acetyl-CoA = a 3-oxoacyl-CoA + CoA. It functions in the pathway lipid metabolism; fatty acid beta-oxidation. In terms of biological role, catalyzes the final step of fatty acid oxidation in which acetyl-CoA is released and the CoA ester of a fatty acid two carbons shorter is formed. This Psychrobacter sp. (strain PRwf-1) protein is 3-ketoacyl-CoA thiolase.